Reading from the N-terminus, the 937-residue chain is Isoleucine--tRNA ligase (937 aa).

Positions 58 to 68 match the 'HIGH' region motif; that stretch reads PYANGSIHIGH. Residue Glu-561 participates in L-isoleucyl-5'-AMP binding. The 'KMSKS' region motif lies at 602–606; it reads KMSKS. Lys-605 is an ATP binding site. Zn(2+) contacts are provided by Cys-900, Cys-903, Cys-920, and Cys-923.

The protein belongs to the class-I aminoacyl-tRNA synthetase family. IleS type 1 subfamily. As to quaternary structure, monomer. The cofactor is Zn(2+).

The protein localises to the cytoplasm. The catalysed reaction is tRNA(Ile) + L-isoleucine + ATP = L-isoleucyl-tRNA(Ile) + AMP + diphosphate. Its function is as follows. Catalyzes the attachment of isoleucine to tRNA(Ile). As IleRS can inadvertently accommodate and process structurally similar amino acids such as valine, to avoid such errors it has two additional distinct tRNA(Ile)-dependent editing activities. One activity is designated as 'pretransfer' editing and involves the hydrolysis of activated Val-AMP. The other activity is designated 'posttransfer' editing and involves deacylation of mischarged Val-tRNA(Ile). This is Isoleucine--tRNA ligase from Photorhabdus laumondii subsp. laumondii (strain DSM 15139 / CIP 105565 / TT01) (Photorhabdus luminescens subsp. laumondii).